Here is a 127-residue protein sequence, read N- to C-terminus: Aspartate 1-decarboxylase (127 aa).

S25 serves as the catalytic Schiff-base intermediate with substrate; via pyruvic acid. S25 is modified (pyruvic acid (Ser)). Residue T57 participates in substrate binding. The active-site Proton donor is the Y58. 73 to 75 (GSA) lines the substrate pocket.

It belongs to the PanD family. In terms of assembly, heterooctamer of four alpha and four beta subunits. Pyruvate is required as a cofactor. Post-translationally, is synthesized initially as an inactive proenzyme, which is activated by self-cleavage at a specific serine bond to produce a beta-subunit with a hydroxyl group at its C-terminus and an alpha-subunit with a pyruvoyl group at its N-terminus.

The protein resides in the cytoplasm. It catalyses the reaction L-aspartate + H(+) = beta-alanine + CO2. The protein operates within cofactor biosynthesis; (R)-pantothenate biosynthesis; beta-alanine from L-aspartate: step 1/1. Functionally, catalyzes the pyruvoyl-dependent decarboxylation of aspartate to produce beta-alanine. This chain is Aspartate 1-decarboxylase, found in Polaromonas naphthalenivorans (strain CJ2).